The chain runs to 35 residues: Mu-theraphotoxin-Pn3b (35 aa).

3 disulfides stabilise this stretch: C2/C16, C9/C21, and C15/C28.

It belongs to the neurotoxin 10 (Hwtx-1) family. 28 (Jztx-11) subfamily. In terms of tissue distribution, expressed by the venom gland.

Its subcellular location is the secreted. Its function is as follows. Gating-modifier toxin that targets voltage-gated sodium channels with a preferential activity on Nav1.7/SCN9A. On Nav1.7/SCN9A, the toxin acts by shifting the voltage-dependence of activation to more depolarized potentials, whereas it does not cause significant effect on the voltage-dependence of activation on other sodium channels. Minor effects are observed on the voltage-dependence of steady-state fast inactivation for all sodium channels tested (Nav1.1/SCN1A-Nav1.8/SCN10A). By testing the toxin on channel chimera, it has been shown to interact with the S3-S4 linkers in DII and DIV domains of Nav1.7/SCN9A. In vivo, the toxin dose-dependently reduces OD1-induced spontaneous pain behaviors. This is Mu-theraphotoxin-Pn3b from Pamphobeteus nigricolor (Giant blue bloom tarantula).